We begin with the raw amino-acid sequence, 601 residues long: Elongation factor 4 (601 aa).

The tr-type G domain occupies 5–187; that stretch reads SNIRNFAIIA…AIVTKLPSPN (183 aa). Residues 17-22 and 134-137 contribute to the GTP site; these read DHGKST and NKID.

Belongs to the TRAFAC class translation factor GTPase superfamily. Classic translation factor GTPase family. LepA subfamily.

Its subcellular location is the cell inner membrane. It catalyses the reaction GTP + H2O = GDP + phosphate + H(+). In terms of biological role, required for accurate and efficient protein synthesis under certain stress conditions. May act as a fidelity factor of the translation reaction, by catalyzing a one-codon backward translocation of tRNAs on improperly translocated ribosomes. Back-translocation proceeds from a post-translocation (POST) complex to a pre-translocation (PRE) complex, thus giving elongation factor G a second chance to translocate the tRNAs correctly. Binds to ribosomes in a GTP-dependent manner. The chain is Elongation factor 4 from Orientia tsutsugamushi (strain Ikeda) (Rickettsia tsutsugamushi).